The following is a 1249-amino-acid chain: Clustered mitochondria protein homolog (1249 aa).

The segment at Met-1 to Asn-34 is disordered. Positions Asp-321–Gln-565 constitute a Clu domain. 2 disordered regions span residues Val-610–Asp-638 and Val-874–Pro-907. Over residues Ala-613–Asp-638 the composition is skewed to basic and acidic residues. TPR repeat units follow at residues Ala-975–Thr-1008, Ile-1017–Ile-1050, and Ile-1059–Leu-1092. The span at Thr-1178–Gln-1191 shows a compositional bias: polar residues. The disordered stretch occupies residues Thr-1178–Ala-1249. Over residues Ser-1192–Ser-1205 the composition is skewed to low complexity.

This sequence belongs to the CLU family. As to quaternary structure, may associate with the eukaryotic translation initiation factor 3 (eIF-3) complex.

Its subcellular location is the cytoplasm. Functionally, mRNA-binding protein involved in proper cytoplasmic distribution of mitochondria. This is Clustered mitochondria protein homolog from Aspergillus oryzae (strain ATCC 42149 / RIB 40) (Yellow koji mold).